The following is a 427-amino-acid chain: MEKLTILLVGSGGREHALAWKIAQSPLCGRLVAAPGNPGIEAVAELRAVKATDADGLVALAQEIGADLVVVGPESALEVGLADKLAAVGIPCFGGSQRAAQLETSKAFTKDFCQRHGLPTAAYGVFEDAASAGAFLDTLEAPFVIKADGLAAGKGVVIAPDRAAADAAVVDMLGGRFGSAGARVVIEEFMHGEEASLFAVCDGKTAVLFGAAQDHKRAYDGDEGPNTGGMGTYSPPPVLTDALIDQAWRELIVPTVEGMAAEGNPYVGVLYAGLMLTPTGPKLVEYNARFGDPECQTLMLRLDSDIVPILLAAAKGELANAEPPKWREEAAICVVLAAEGYPDAPKTGGRIQGADADFGDDVVVFHAGTTREFEGRLVASGGRVLNVCALGATLSEAREAAYGALETISLEGGFYRTDIGWRALQQR.

In terms of domain architecture, ATP-grasp spans 110-315; sequence KDFCQRHGLP…IVPILLAAAK (206 aa). Residue 136-196 participates in ATP binding; sequence LDTLEAPFVI…EEFMHGEEAS (61 aa). Positions 285 and 287 each coordinate Mg(2+).

Belongs to the GARS family. Mg(2+) serves as cofactor. Requires Mn(2+) as cofactor.

The enzyme catalyses 5-phospho-beta-D-ribosylamine + glycine + ATP = N(1)-(5-phospho-beta-D-ribosyl)glycinamide + ADP + phosphate + H(+). Its pathway is purine metabolism; IMP biosynthesis via de novo pathway; N(1)-(5-phospho-D-ribosyl)glycinamide from 5-phospho-alpha-D-ribose 1-diphosphate: step 2/2. This Caulobacter vibrioides (strain ATCC 19089 / CIP 103742 / CB 15) (Caulobacter crescentus) protein is Phosphoribosylamine--glycine ligase.